The chain runs to 200 residues: Early E1A 21 kDa protein (200 aa).

The interval 78 to 98 is disordered; it reads QDSTTATSAEEPSASTDSISS. Residues 114 to 118 carry the LXCXE motif, interaction with host RB1 motif; the sequence is LRCYE. A zinc finger spans residues 136-151; that stretch reads CSTCGGHEVNGFCSLC. The short motif at 196–200 is the Nuclear localization signal element; that stretch reads SRHDE.

In terms of assembly, interaction with host RB1 induces the aberrant dissociation of RB1-E2F1 complex thereby disrupting RB1's activity.

Its function is as follows. E1A protein has both transforming and trans-activating activities. Plays a role in viral genome replication by driving entry of quiescent cells into the cell cycle. Disrupts the function of host retinoblastoma protein RB1/pRb and isoform early E1A 26 kDa protein stabilizes TP53, which are key regulators of the cell cycle. Induces the disassembly of the E2F1 transcription factors from RB1 by direct competition for the same binding site on RB1, with subsequent transcriptional activation of E2F1-regulated S-phase genes. Inactivation of the ability of RB1 to arrest the cell cycle is critical for cellular transformation, uncontrolled cellular growth and proliferation induced by viral infection. Stimulation of progression from G1 to S phase allows the virus to efficiently use the cellular DNA replicating machinery to achieve viral genome replication. The sequence is that of Early E1A 21 kDa protein from Murine adenovirus A serotype 1 (MAdV-1).